Consider the following 98-residue polypeptide: Integration host factor subunit alpha (98 aa).

Positions 49–70 are disordered; that stretch reads FGNFDLRDKNQRPGRNPKTGED.

It belongs to the bacterial histone-like protein family. Heterodimer of an alpha and a beta chain.

Its function is as follows. This protein is one of the two subunits of integration host factor, a specific DNA-binding protein that functions in genetic recombination as well as in transcriptional and translational control. This chain is Integration host factor subunit alpha, found in Yersinia pestis.